The sequence spans 33 residues: Gaegurin-3 (33 aa).

Cys27 and Cys33 form a disulfide bridge.

This sequence belongs to the frog skin active peptide (FSAP) family. Brevinin subfamily. In terms of assembly, monomer. As to expression, expressed by the skin glands.

The protein localises to the secreted. In terms of biological role, has a non-hemolytic activity. Has a broad spectrum of activity against both Gram-positive and Gram-negative bacteria, fungi and protozoa. The chain is Gaegurin-3 (GGN3) from Glandirana rugosa (Japanese wrinkled frog).